A 504-amino-acid polypeptide reads, in one-letter code: ATP synthase subunit alpha (504 aa).

170-177 provides a ligand contact to ATP; sequence GDRQTGKT.

It belongs to the ATPase alpha/beta chains family. As to quaternary structure, F-type ATPases have 2 components, CF(1) - the catalytic core - and CF(0) - the membrane proton channel. CF(1) has five subunits: alpha(3), beta(3), gamma(1), delta(1), epsilon(1). CF(0) has four main subunits: a(1), b(1), b'(1) and c(9-12).

The protein localises to the cellular thylakoid membrane. The enzyme catalyses ATP + H2O + 4 H(+)(in) = ADP + phosphate + 5 H(+)(out). Produces ATP from ADP in the presence of a proton gradient across the membrane. The alpha chain is a regulatory subunit. The protein is ATP synthase subunit alpha of Prochlorococcus marinus (strain NATL1A).